The chain runs to 713 residues: Catalase-peroxidase (713 aa).

A cross-link (tryptophyl-tyrosyl-methioninium (Trp-Tyr) (with M-226)) is located at residues 77-200; that stretch reads WHSAGTYRTT…LGATVMGLIY (124 aa). Catalysis depends on His78, which acts as the Proton acceptor. The segment at residues 200–226 is a cross-link (tryptophyl-tyrosyl-methioninium (Tyr-Met) (with W-77)); sequence YVNPEGPDGEPDLEGSAANIRESFGRM. His241 lines the heme b pocket.

The protein belongs to the peroxidase family. Peroxidase/catalase subfamily. As to quaternary structure, homodimer or homotetramer. The cofactor is heme b. In terms of processing, formation of the three residue Trp-Tyr-Met cross-link is important for the catalase, but not the peroxidase activity of the enzyme.

It catalyses the reaction H2O2 + AH2 = A + 2 H2O. The catalysed reaction is 2 H2O2 = O2 + 2 H2O. Its function is as follows. Bifunctional enzyme with both catalase and broad-spectrum peroxidase activity. The chain is Catalase-peroxidase from Natronomonas pharaonis (strain ATCC 35678 / DSM 2160 / CIP 103997 / JCM 8858 / NBRC 14720 / NCIMB 2260 / Gabara) (Halobacterium pharaonis).